Reading from the N-terminus, the 205-residue chain is Large ribosomal subunit protein uL4 (205 aa).

Residues V56–R78 are disordered.

The protein belongs to the universal ribosomal protein uL4 family. In terms of assembly, part of the 50S ribosomal subunit.

In terms of biological role, one of the primary rRNA binding proteins, this protein initially binds near the 5'-end of the 23S rRNA. It is important during the early stages of 50S assembly. It makes multiple contacts with different domains of the 23S rRNA in the assembled 50S subunit and ribosome. Functionally, forms part of the polypeptide exit tunnel. This chain is Large ribosomal subunit protein uL4, found in Ehrlichia ruminantium (strain Gardel).